Here is a 267-residue protein sequence, read N- to C-terminus: Phosphatidylglycerol--prolipoprotein diacylglyceryl transferase (267 aa).

Transmembrane regions (helical) follow at residues 21–41 (VSLH…YWLG), 60–80 (LLFN…VFFY), and 95–115 (IWEG…AMLW). Arg143 serves as a coordination point for a 1,2-diacyl-sn-glycero-3-phospho-(1'-sn-glycerol). 2 consecutive transmembrane segments (helical) span residues 203-223 (GSVA…VEYF) and 240-260 (GQLL…VAYY).

Belongs to the Lgt family.

The protein resides in the cell inner membrane. The enzyme catalyses L-cysteinyl-[prolipoprotein] + a 1,2-diacyl-sn-glycero-3-phospho-(1'-sn-glycerol) = an S-1,2-diacyl-sn-glyceryl-L-cysteinyl-[prolipoprotein] + sn-glycerol 1-phosphate + H(+). Its pathway is protein modification; lipoprotein biosynthesis (diacylglyceryl transfer). In terms of biological role, catalyzes the transfer of the diacylglyceryl group from phosphatidylglycerol to the sulfhydryl group of the N-terminal cysteine of a prolipoprotein, the first step in the formation of mature lipoproteins. The polypeptide is Phosphatidylglycerol--prolipoprotein diacylglyceryl transferase (Glaesserella parasuis serovar 5 (strain SH0165) (Haemophilus parasuis)).